The chain runs to 254 residues: NFU1 iron-sulfur cluster scaffold homolog, mitochondrial (254 aa).

Residues 1-9 (MAATARRGW) constitute a mitochondrion transit peptide. Positions 173–241 (IKELLDTRIR…IPEVEGVEQV (69 aa)) are nifU. Residues cysteine 210 and cysteine 213 each coordinate [4Fe-4S] cluster.

Belongs to the NifU family. Monomer and homohexamer; the apo-NFU1 is a monomer, while the holo-NFU1 is a hexamer composed of a trimer of dimer that is probably linked by some 4Fe-4S cluster. Interacts with HIRA and EPM2A/laforin. Interacts with BOLA3. Interacts with HSPA9. Ubiquitous. Expression in adult lung is weak compared to fetal lung.

It localises to the mitochondrion. It is found in the cytoplasm. The protein localises to the cytosol. Its function is as follows. Iron-sulfur cluster scaffold protein which can assemble [4Fe-4S] clusters and deliver them to target proteins. The protein is NFU1 iron-sulfur cluster scaffold homolog, mitochondrial (NFU1) of Homo sapiens (Human).